A 408-amino-acid chain; its full sequence is Lipoate--protein ligase 1 (408 aa).

A mitochondrion-targeting transit peptide spans 1–18 (MKRIFRLVRRCHYSTEKR). The 183-residue stretch at 60 to 242 (KFNEPILFLW…EFTKFYEQNY (183 aa)) folds into the BPL/LPL catalytic domain. Arg-102, Gly-107, and Tyr-110 together coordinate ATP. A (R)-lipoate-binding site is contributed by Gly-107. Asp-153 contacts Mg(2+). Lys-160 serves as a coordination point for ATP. Lys-160 is a (R)-lipoate binding site.

The protein belongs to the LplA family.

It localises to the mitochondrion. It catalyses the reaction L-lysyl-[lipoyl-carrier protein] + (R)-lipoate + ATP = N(6)-[(R)-lipoyl]-L-lysyl-[lipoyl-carrier protein] + AMP + diphosphate + H(+). It carries out the reaction (R)-dihydrolipoate + L-lysyl-[lipoyl-carrier protein] + ATP = N(6)-[(R)-dihydrolipoyl]-L-lysyl-[lipoyl-carrier protein] + AMP + diphosphate + H(+). The enzyme catalyses (R)-dihydrolipoate + ATP + H(+) = N(6)-[(R)-dihydrolipoyl]-5'-AMP + diphosphate. The catalysed reaction is N(6)-[(R)-dihydrolipoyl]-5'-AMP + L-lysyl-[lipoyl-carrier protein] = N(6)-[(R)-dihydrolipoyl]-L-lysyl-[lipoyl-carrier protein] + AMP + 2 H(+). It participates in protein modification; protein lipoylation via exogenous pathway; protein N(6)-(lipoyl)lysine from lipoate: step 1/2. It functions in the pathway protein modification; protein lipoylation via exogenous pathway; protein N(6)-(lipoyl)lysine from lipoate: step 2/2. Inhibited by the lipoate analog 8-bromo-octanoate (BrO). Catalytic activity is increased in the presence of Mg(2+). Functionally, catalyzes both the ATP-dependent activation of exogenously supplied lipoate to lipoyl-AMP and the transfer of the activated lipoyl onto the lipoyl domains of lipoate-dependent enzymes. In the mitochondrion, functions as a redox switch between two lipoylation routes. Senses the oxidation state of lipoate and determines which downstream enzymes will be lipoylated. In low reducing conditions, uses lipoate in its oxidized ring form to lipoylate glycine cleavage system H-protein GCVH. In high reducing conditions and together with LipL2, uses reduced lipoate (dihydrolipoate) to lipoylate the E2 component of the branched chain alpha-ketoacid dehydrogenase complex BCKDH-E2/BCDH and the E2 component of the alpha-ketoglutarate dehydrogenase complex KDH. LipL1 is responsible for catalysing the activation of lipoate, forming lipoyl-AMP while LipL2 is required but is not capable of catalyzing this reaction. This is Lipoate--protein ligase 1 from Plasmodium falciparum (isolate 3D7).